The following is a 240-amino-acid chain: Enoyl-CoA delta isomerase 2, peroxisomal (240 aa).

The short motif at 238-240 (PKL) is the Microbody targeting signal element.

The protein belongs to the enoyl-CoA hydratase/isomerase family.

It localises to the peroxisome. It catalyses the reaction a (3Z)-enoyl-CoA = a 4-saturated (2E)-enoyl-CoA. It carries out the reaction a (3E)-enoyl-CoA = a 4-saturated (2E)-enoyl-CoA. It participates in lipid metabolism; fatty acid beta-oxidation. Able to isomerize both 3-cis and 3-trans double bonds into the 2-trans form in a range of enoyl-CoA species. Essential for the beta oxidation of unsaturated fatty acids. Involved with IBR1 and IBR3 in the peroxisomal beta-oxidation of indole-3-butyric acid (IBA) to form indole-3-acetic acid (IAA), a biologically active auxin. The chain is Enoyl-CoA delta isomerase 2, peroxisomal from Arabidopsis thaliana (Mouse-ear cress).